Reading from the N-terminus, the 94-residue chain is Pyrimidine/purine nucleoside phosphorylase (94 aa).

This sequence belongs to the nucleoside phosphorylase PpnP family.

It catalyses the reaction a purine D-ribonucleoside + phosphate = a purine nucleobase + alpha-D-ribose 1-phosphate. It carries out the reaction adenosine + phosphate = alpha-D-ribose 1-phosphate + adenine. The enzyme catalyses cytidine + phosphate = cytosine + alpha-D-ribose 1-phosphate. The catalysed reaction is guanosine + phosphate = alpha-D-ribose 1-phosphate + guanine. It catalyses the reaction inosine + phosphate = alpha-D-ribose 1-phosphate + hypoxanthine. It carries out the reaction thymidine + phosphate = 2-deoxy-alpha-D-ribose 1-phosphate + thymine. The enzyme catalyses uridine + phosphate = alpha-D-ribose 1-phosphate + uracil. The catalysed reaction is xanthosine + phosphate = alpha-D-ribose 1-phosphate + xanthine. Catalyzes the phosphorolysis of diverse nucleosides, yielding D-ribose 1-phosphate and the respective free bases. Can use uridine, adenosine, guanosine, cytidine, thymidine, inosine and xanthosine as substrates. Also catalyzes the reverse reactions. This Salmonella agona (strain SL483) protein is Pyrimidine/purine nucleoside phosphorylase.